The sequence spans 224 residues: Octanoyltransferase (224 aa).

The BPL/LPL catalytic domain occupies 29–224 (EATPDALWIC…GQKLATYLAP (196 aa)). Residues 68–75 (RGGQVTFH), 157–159 (ALG), and 170–172 (GVA) contribute to the substrate site. C188 acts as the Acyl-thioester intermediate in catalysis.

Belongs to the LipB family.

The protein localises to the cytoplasm. It catalyses the reaction octanoyl-[ACP] + L-lysyl-[protein] = N(6)-octanoyl-L-lysyl-[protein] + holo-[ACP] + H(+). The protein operates within protein modification; protein lipoylation via endogenous pathway; protein N(6)-(lipoyl)lysine from octanoyl-[acyl-carrier-protein]: step 1/2. Its function is as follows. Catalyzes the transfer of endogenously produced octanoic acid from octanoyl-acyl-carrier-protein onto the lipoyl domains of lipoate-dependent enzymes. Lipoyl-ACP can also act as a substrate although octanoyl-ACP is likely to be the physiological substrate. The protein is Octanoyltransferase of Polaromonas naphthalenivorans (strain CJ2).